The chain runs to 406 residues: Argininosuccinate synthase (406 aa).

ATP contacts are provided by residues 11–19 (AYSGGLDTS) and Ala38. L-citrulline-binding residues include Tyr91 and Ser96. Gly121 provides a ligand contact to ATP. L-aspartate is bound by residues Thr123, Asn127, and Asp128. Asn127 provides a ligand contact to L-citrulline. L-citrulline is bound by residues Arg131, Ser181, Ser190, Glu266, and Tyr278.

This sequence belongs to the argininosuccinate synthase family. Type 1 subfamily. Homotetramer.

It is found in the cytoplasm. The enzyme catalyses L-citrulline + L-aspartate + ATP = 2-(N(omega)-L-arginino)succinate + AMP + diphosphate + H(+). Its pathway is amino-acid biosynthesis; L-arginine biosynthesis; L-arginine from L-ornithine and carbamoyl phosphate: step 2/3. The chain is Argininosuccinate synthase from Campylobacter lari (strain RM2100 / D67 / ATCC BAA-1060).